Consider the following 304-residue polypeptide: Non-specific ribonucleoside hydrolase RihC (304 aa).

The active site involves His-233.

This sequence belongs to the IUNH family. RihC subfamily.

In terms of biological role, hydrolyzes both purine and pyrimidine ribonucleosides with a broad-substrate specificity. The sequence is that of Non-specific ribonucleoside hydrolase RihC from Escherichia coli O6:H1 (strain CFT073 / ATCC 700928 / UPEC).